The primary structure comprises 343 residues: Anthranilate phosphoribosyltransferase (343 aa).

5-phospho-alpha-D-ribose 1-diphosphate is bound by residues G79, 82-83 (GD), T87, 89-92 (NVST), 106-114 (KHGNRAASS), and S118. G79 contacts anthranilate. S91 is a binding site for Mg(2+). N109 is a binding site for anthranilate. R164 lines the anthranilate pocket. Mg(2+)-binding residues include D223 and E224.

This sequence belongs to the anthranilate phosphoribosyltransferase family. As to quaternary structure, homodimer. Mg(2+) is required as a cofactor.

The catalysed reaction is N-(5-phospho-beta-D-ribosyl)anthranilate + diphosphate = 5-phospho-alpha-D-ribose 1-diphosphate + anthranilate. It participates in amino-acid biosynthesis; L-tryptophan biosynthesis; L-tryptophan from chorismate: step 2/5. Catalyzes the transfer of the phosphoribosyl group of 5-phosphorylribose-1-pyrophosphate (PRPP) to anthranilate to yield N-(5'-phosphoribosyl)-anthranilate (PRA). This is Anthranilate phosphoribosyltransferase from Metallosphaera sedula (strain ATCC 51363 / DSM 5348 / JCM 9185 / NBRC 15509 / TH2).